The sequence spans 481 residues: Glutamyl-tRNA(Gln) amidotransferase subunit A (481 aa).

Residues Lys74 and Ser149 each act as charge relay system in the active site. The active-site Acyl-ester intermediate is the Ser173.

The protein belongs to the amidase family. GatA subfamily. As to quaternary structure, heterotrimer of A, B and C subunits.

The catalysed reaction is L-glutamyl-tRNA(Gln) + L-glutamine + ATP + H2O = L-glutaminyl-tRNA(Gln) + L-glutamate + ADP + phosphate + H(+). Its function is as follows. Allows the formation of correctly charged Gln-tRNA(Gln) through the transamidation of misacylated Glu-tRNA(Gln) in organisms which lack glutaminyl-tRNA synthetase. The reaction takes place in the presence of glutamine and ATP through an activated gamma-phospho-Glu-tRNA(Gln). The chain is Glutamyl-tRNA(Gln) amidotransferase subunit A from Francisella tularensis subsp. tularensis (strain WY96-3418).